The primary structure comprises 443 residues: MIKNPKLLTKSFLRSFAILGGVGLVIHIAIYLTFPFYYIQLEGEKFNESARVFTEYLKTKTSDEIPSLLQSYSKSLTISAHLKRDIVDKRLPLVHDLDIKDGKLSNYIVMLDMSVSTADGKQVTVQFVHGVDVYKEAKNILLLYLPYTFLVTIAFSFVFSYFYTKRLLNPLFYISEVTSKMQDLDDNIRFDESRKDEVGEVGKQINGMYEHLLKVIHELESRNEQIVKLQNQKVSFVRGASHELKTPLASLRIILENMQHNIGDYKDHPKYIAKSINKIDQMSHLLEEVLESSKFQEWTECRETLTVKPVLVDILSRYQELAHSIGVTIENQLTDATRVVMSLRALDKVLTNLISNAIKYSDKNGRVIISEQDGYLSIKNTCAPLSDQELEHLFDIFYHSQIVTDKDESSGLGLYIVNNILESYQMDYSFLPYEHGMEFKISL.

Transmembrane regions (helical) follow at residues 16 to 36 (FAIL…TFPF) and 140 to 160 (ILLL…FVFS). The HAMP domain occupies 165–217 (KRLLNPLFYISEVTSKMQDLDDNIRFDESRKDEVGEVGKQINGMYEHLLKVIH). Residues 239–443 (GASHELKTPL…EHGMEFKISL (205 aa)) form the Histidine kinase domain. The residue at position 242 (His242) is a Phosphohistidine; by autocatalysis.

It localises to the cell membrane. The catalysed reaction is ATP + protein L-histidine = ADP + protein N-phospho-L-histidine.. Functionally, member of the two-component regulatory system HK06/RR06 involved in regulation of target genes, including choline-binding protein CbpA. Has been shown in one study to not be required for regulation of expression of choline-binding protein CbpA. The protein is Sensor histidine protein kinase HK06 of Streptococcus pneumoniae serotype 2 (strain D39 / NCTC 7466).